The following is a 290-amino-acid chain: Nucleotide-binding protein Bpet0443 (290 aa).

9–16 contacts ATP; that stretch reads GISGSGKS. Residue 58 to 61 participates in GTP binding; the sequence is DVRS.

Belongs to the RapZ-like family.

Its function is as follows. Displays ATPase and GTPase activities. This is Nucleotide-binding protein Bpet0443 from Bordetella petrii (strain ATCC BAA-461 / DSM 12804 / CCUG 43448).